We begin with the raw amino-acid sequence, 237 residues long: Small ribosomal subunit protein uS3 (237 aa).

Positions valine 17 to aspartate 86 constitute a KH type-2 domain.

It belongs to the universal ribosomal protein uS3 family. Part of the 30S ribosomal subunit.

In terms of biological role, binds the lower part of the 30S subunit head. The chain is Small ribosomal subunit protein uS3 from Methanospirillum hungatei JF-1 (strain ATCC 27890 / DSM 864 / NBRC 100397 / JF-1).